The following is a 94-amino-acid chain: Selenoprotein K (94 aa).

A helical transmembrane segment spans residues 20–42 (LSLITDFFWGIAEFVVLFFKTLL). Residues 48-94 (KRRSYGNSSDSRYDDGRGPPGNPPRRMGRINHLRGPSPPPMAGGUGR) are disordered. A non-standard amino acid (selenocysteine) is located at residue U92.

It belongs to the selenoprotein K family. As to quaternary structure, interacts with DERL1, DERL2, DERL3 and SELENOS. The SELENOK-SELENOS complex interacts with VCP. Interacts with ZDHHC6. In terms of processing, cleaved by CAPN2/m-calpain in resting macrophages but not in activated macrophages. Macrophage activation up-regulates expression of the calpain inhibitor CAST/calpastatin, resulting in inhibition of CAPN2 activity. Truncated SELENOK proteins produced by failed UGA/Sec decoding are ubiquitinated by the CRL2(KLHDC2) complex, which recognizes the diglycine (Gly-Gly) at the C-terminus of truncated SELENOK proteins. In terms of tissue distribution, highly expressed in heart.

The protein localises to the endoplasmic reticulum membrane. The protein resides in the cell membrane. Functionally, required for Ca(2+) flux in immune cells and plays a role in T-cell proliferation and in T-cell and neutrophil migration. Involved in endoplasmic reticulum-associated degradation (ERAD) of soluble glycosylated proteins. Required for palmitoylation and cell surface expression of CD36 and involved in macrophage uptake of low-density lipoprotein and in foam cell formation. Together with ZDHHC6, required for palmitoylation of ITPR1 in immune cells, leading to regulate ITPR1 stability and function. Plays a role in protection of cells from ER stress-induced apoptosis. Protects cells from oxidative stress when overexpressed in cardiomyocytes. The chain is Selenoprotein K from Homo sapiens (Human).